The chain runs to 322 residues: Ubiquinone biosynthesis O-methyltransferase, mitochondrial (322 aa).

A mitochondrion-targeting transit peptide spans 1-37 (MLASVRVNQLQRLLLSARRLSSSPIIPPSRLLHQRLF). Residues 46–75 (AASFSSSHPKIQTLEGKASNKSRSTSSTTS) form a disordered region. Positions 108, 139, 160, and 205 each coordinate S-adenosyl-L-methionine. 3 residues coordinate Mg(2+): glutamate 206, glutamate 209, and histidine 210.

It belongs to the class I-like SAM-binding methyltransferase superfamily. UbiG/COQ3 family. Component of a multi-subunit COQ enzyme complex. It depends on Mg(2+) as a cofactor.

It localises to the mitochondrion inner membrane. The catalysed reaction is a 3,4-dihydroxy-5-(all-trans-polyprenyl)benzoate + S-adenosyl-L-methionine = a 4-hydroxy-3-methoxy-5-(all-trans-polyprenyl)benzoate + S-adenosyl-L-homocysteine + H(+). The enzyme catalyses a 3-demethylubiquinone + S-adenosyl-L-methionine = a ubiquinone + S-adenosyl-L-homocysteine. It carries out the reaction a 3-demethylubiquinol + S-adenosyl-L-methionine = a ubiquinol + S-adenosyl-L-homocysteine + H(+). It participates in cofactor biosynthesis; ubiquinone biosynthesis. Its function is as follows. O-methyltransferase required for two non-consecutive steps during ubiquinone biosynthesis. Catalyzes the 2 O-methylation of 3,4-dihydroxy-5-(all-trans-polyprenyl)benzoic acid into 4-hydroxy-3-methoxy-5-(all-trans-polyprenyl)benzoic acid. Also catalyzes the last step of ubiquinone biosynthesis by mediating methylation of 3-demethylubiquinone into ubiquinone. Also able to mediate the methylation of 3-demethylubiquinol into ubiquinol. The sequence is that of Ubiquinone biosynthesis O-methyltransferase, mitochondrial from Arabidopsis thaliana (Mouse-ear cress).